The sequence spans 684 residues: U4/U6 small nuclear ribonucleoprotein Prp3 (684 aa).

Residues 1-87 (MSLSKRELDE…HSKSNSDRNR (87 aa)) enclose the PWI domain. Residues 73 to 107 (GRSSRHSKSNSDRNRKRELKDVFGDDSEVSKESSG) are compositionally biased toward basic and acidic residues. Disordered stretches follow at residues 73–109 (GRSSRHSKSNSDRNRKRELKDVFGDDSEVSKESSGVK) and 162–183 (FISPPTPQPKISSSSQSERLPI). The span at 170–183 (PKISSSSQSERLPI) shows a compositional bias: polar residues.

Component of the precatalytic spliceosome (spliceosome B complex). Component of the U4/U6-U5 tri-snRNP complex, a building block of the precatalytic spliceosome (spliceosome B complex). The U4/U6-U5 tri-snRNP complex is composed of the U4, U6 and U5 snRNAs and at least PRPF3, PRPF4, PRPF6, PRPF8, PRPF31, SNRNP200, TXNL4A, SNRNP40, SNRPB, SNRPD1, SNRPD2, SNRPD3, SNRPE, SNRPF, SNRPG, DDX23, CD2BP2, PPIH, SNU13, EFTUD2, SART1 and USP39, plus LSM2, LSM3, LSM4, LSM5, LSM6, LSM7 and LSM8.

Its subcellular location is the nucleus. It localises to the nucleus speckle. Its function is as follows. Plays a role in pre-mRNA splicing as component of the U4/U6-U5 tri-snRNP complex that is involved in spliceosome assembly, and as component of the precatalytic spliceosome (spliceosome B complex). In Gallus gallus (Chicken), this protein is U4/U6 small nuclear ribonucleoprotein Prp3 (PRPF3).